The sequence spans 202 residues: Phosphatidyl-N-methylethanolamine N-methyltransferase (202 aa).

The Lumenal portion of the chain corresponds to 1–12 (MTTLSDYVDFSQ). The segment at residues 13 to 33 (DSFKYAALSIAFNPIFWNVVA) is an intramembrane region (helical). The Lumenal portion of the chain corresponds to 34–45 (RAEYRSHFLTRI). The chain crosses the membrane as a helical span at residues 46–66 (FGSPYRGCYFLAITIFSLGIL). Over 67–90 (RDHIYQQALEDQPYYAPVHQPVLG) the chain is Cytoplasmic. Residues 91–111 (GALFAVGSVLVLSSMYALGVT) traverse the membrane as a helical segment. 95–97 (AVG) contacts S-adenosyl-L-methionine. Over 112-154 (GTYLGDYFGILMDAPVTGFPFNVTGSPMYWGSTLNFLGVALYK) the chain is Lumenal. The helical transmembrane segment at 155-175 (GKVAGILLTALVFVLYWFALK) threads the bilayer. Over 176–202 (WEDPFTAEIYAKRERERAKSKRGGKNQ) the chain is Cytoplasmic. 177 to 178 (ED) is an S-adenosyl-L-methionine binding site.

Belongs to the class VI-like SAM-binding methyltransferase superfamily. PEMT/PEM2 methyltransferase family.

It is found in the endoplasmic reticulum membrane. It localises to the mitochondrion membrane. The catalysed reaction is a 1,2-diacyl-sn-glycero-3-phospho-N-methylethanolamine + S-adenosyl-L-methionine = a 1,2-diacyl-sn-glycero-3-phospho-N,N-dimethylethanolamine + S-adenosyl-L-homocysteine + H(+). It catalyses the reaction a 1,2-diacyl-sn-glycero-3-phospho-N,N-dimethylethanolamine + S-adenosyl-L-methionine = a 1,2-diacyl-sn-glycero-3-phosphocholine + S-adenosyl-L-homocysteine + H(+). It functions in the pathway phospholipid metabolism; phosphatidylcholine biosynthesis. Functionally, catalyzes the second two steps of the methylation pathway of phosphatidylcholine biosynthesis, the SAM-dependent methylation of phosphatidylmonomethylethanolamine (PMME) to phosphatidyldimethylethanolamine (PDME) and of PDME to phosphatidylcholine (PC). This chain is Phosphatidyl-N-methylethanolamine N-methyltransferase, found in Emericella nidulans (strain FGSC A4 / ATCC 38163 / CBS 112.46 / NRRL 194 / M139) (Aspergillus nidulans).